Reading from the N-terminus, the 260-residue chain is Global transcriptional regulator CodY (260 aa).

The interval 1-159 (MPNLLQKTRK…SSTVVGIQLL (159 aa)) is GAF domain. The H-T-H motif DNA-binding region spans 207 to 226 (ASVIADRIGITRSVIVNALR).

This sequence belongs to the CodY family.

It localises to the cytoplasm. DNA-binding global transcriptional regulator which is involved in the adaptive response to starvation and acts by directly or indirectly controlling the expression of numerous genes in response to nutrient availability. During rapid exponential growth, CodY is highly active and represses genes whose products allow adaptation to nutrient depletion. The protein is Global transcriptional regulator CodY of Streptococcus equi subsp. zooepidemicus (strain MGCS10565).